A 191-amino-acid polypeptide reads, in one-letter code: Phosphoheptose isomerase (191 aa).

One can recognise an SIS domain in the interval Ile-37–Leu-191. Asn-52 to Gly-54 is a substrate binding site. Zn(2+) contacts are provided by His-61 and Glu-65. Substrate-binding positions include Glu-65, Asn-93–Asp-94, Ser-119–Ser-121, Ser-124, and Gln-172. Zn(2+) is bound by residues Gln-172 and His-180.

It belongs to the SIS family. GmhA subfamily. Zn(2+) serves as cofactor.

It is found in the cytoplasm. It carries out the reaction 2 D-sedoheptulose 7-phosphate = D-glycero-alpha-D-manno-heptose 7-phosphate + D-glycero-beta-D-manno-heptose 7-phosphate. The protein operates within carbohydrate biosynthesis; D-glycero-D-manno-heptose 7-phosphate biosynthesis; D-glycero-alpha-D-manno-heptose 7-phosphate and D-glycero-beta-D-manno-heptose 7-phosphate from sedoheptulose 7-phosphate: step 1/1. Functionally, catalyzes the isomerization of sedoheptulose 7-phosphate in D-glycero-D-manno-heptose 7-phosphate. The protein is Phosphoheptose isomerase of Cytophaga hutchinsonii (strain ATCC 33406 / DSM 1761 / CIP 103989 / NBRC 15051 / NCIMB 9469 / D465).